The primary structure comprises 315 residues: Shiga toxin subunit A (315 aa).

Residues 1–22 (MKIIIFRVLTFFFVIFSVNVVA) form the signal peptide. Positions 23-273 (KEFTLDFSTA…CHHHASRVAR (251 aa)) are A1. Residue Glu189 is part of the active site. Cys264 and Cys283 are oxidised to a cystine. The interval 274-315 (MASDEFPSMCPADGRVRGITHNKILWDSSTLGAILMRRTISS) is A2.

It belongs to the ribosome-inactivating protein family. In terms of assembly, shiga toxin contains a single subunit A and five copies of subunit B.

It carries out the reaction Endohydrolysis of the N-glycosidic bond at one specific adenosine on the 28S rRNA.. Its function is as follows. The A subunit is responsible for inhibiting protein synthesis through the catalytic inactivation of 60S ribosomal subunits. After endocytosis, the A subunit is cleaved by furin in two fragments, A1 and A2: A1 is the catalytically active fragment, and A2 is essential for holotoxin assembly with the B subunits. This Shigella sonnei (Shigella sonnei bacteriophage 7888) protein is Shiga toxin subunit A (stxA).